Here is an 84-residue protein sequence, read N- to C-terminus: Large ribosomal subunit protein eL34 (84 aa).

Belongs to the eukaryotic ribosomal protein eL34 family.

This Pyrobaculum aerophilum (strain ATCC 51768 / DSM 7523 / JCM 9630 / CIP 104966 / NBRC 100827 / IM2) protein is Large ribosomal subunit protein eL34 (ribL34e).